Here is a 352-residue protein sequence, read N- to C-terminus: NAD(+)-dependent homoserine dehydrogenase (352 aa).

This sequence belongs to the homoserine dehydrogenase family.

The enzyme catalyses L-homoserine + NAD(+) = L-aspartate 4-semialdehyde + NADH + H(+). Functionally, dehydrogenase involved in the degradation of canavanine, the delta-oxa-analog of arginine, allowing growth on canavanine as sole nitrogen and carbon source. Catalyzes the conversion of homoserine and NAD(+) to aspartate-semialdehyde and NADH. Is highly specific for NAD(+) and cannot use NADP(+). This chain is NAD(+)-dependent homoserine dehydrogenase, found in Pseudomonas canavaninivorans.